Consider the following 145-residue polypeptide: Flagellar assembly factor FliW (145 aa).

The protein belongs to the FliW family. Interacts with translational regulator CsrA and flagellin(s).

The protein resides in the cytoplasm. Its function is as follows. Acts as an anti-CsrA protein, binds CsrA and prevents it from repressing translation of its target genes, one of which is flagellin. Binds to flagellin and participates in the assembly of the flagellum. The protein is Flagellar assembly factor FliW of Clostridium tetani (strain Massachusetts / E88).